We begin with the raw amino-acid sequence, 200 residues long: Probable nicotinate-nucleotide adenylyltransferase (200 aa).

It belongs to the NadD family.

The enzyme catalyses nicotinate beta-D-ribonucleotide + ATP + H(+) = deamido-NAD(+) + diphosphate. It functions in the pathway cofactor biosynthesis; NAD(+) biosynthesis; deamido-NAD(+) from nicotinate D-ribonucleotide: step 1/1. Catalyzes the reversible adenylation of nicotinate mononucleotide (NaMN) to nicotinic acid adenine dinucleotide (NaAD). This is Probable nicotinate-nucleotide adenylyltransferase from Clostridium botulinum (strain Alaska E43 / Type E3).